The following is a 229-amino-acid chain: Transmembrane protein 217 (229 aa).

The chain crosses the membrane as a helical span at residues 13–33; that stretch reads MGTVLSGVFTIMAVDMYLIFE. N-linked (GlcNAc...) asparagine glycosylation is present at N39. Transmembrane regions (helical) follow at residues 67–87, 94–114, and 129–149; these read IVLF…YSVY, LVIY…IQIL, and WFGL…VINY. N156 is a glycosylation site (N-linked (GlcNAc...) asparagine).

The protein resides in the membrane. The sequence is that of Transmembrane protein 217 (TMEM217) from Homo sapiens (Human).